The primary structure comprises 107 residues: Anti-adapter protein IraM (107 aa).

This sequence belongs to the IraM/RssC family.

It is found in the cytoplasm. Functionally, inhibits RpoS proteolysis by regulating RssB activity, thereby increasing the stability of the sigma stress factor RpoS during magnesium starvation. The chain is Anti-adapter protein IraM from Escherichia coli O7:K1 (strain IAI39 / ExPEC).